Consider the following 276-residue polypeptide: Chlorophyll a-b binding protein CP29.3, chloroplastic (276 aa).

Residues 1–29 (MATTTAAAASGIFGIRIQDPRPGTGRVQA) constitute a chloroplast transit peptide. Residues 1–53 (MATTTAAAASGIFGIRIQDPRPGTGRVQARFGFSFGKKKPAPPPKKSRQVQDD) form a disordered region. Positions 36 to 48 (GKKKPAPPPKKSR) are enriched in basic residues. Trp59 lines the chlorophyll b pocket. The chlorophyll a site is built by Phe79, Glu141, and His144. The chain crosses the membrane as a helical span at residues 147-167 (WAMLGTLGAIAVEALTGIAWQ). Leu181 is a binding site for chlorophyll a. The helical transmembrane segment at 185 to 205 (LPFSLTTLIWIEVLVVGYIEF) threads the bilayer. Glu204 and Arg207 together coordinate chlorophyll b. Positions 242, 245, 247, and 259 each coordinate chlorophyll a. The helical transmembrane segment at 248 to 268 (LAMVAFLIFALQAAFTGKGPV) threads the bilayer.

Belongs to the light-harvesting chlorophyll a/b-binding (LHC) protein family. In terms of assembly, the LHC complex consists of chlorophyll a-b binding proteins. Binds at least 14 chlorophylls (8 Chl-a and 6 Chl-b) and carotenoids such as lutein and neoxanthin. serves as cofactor. Photoregulated by reversible phosphorylation of its threonine residues.

It localises to the plastid. The protein resides in the chloroplast thylakoid membrane. Its function is as follows. The light-harvesting complex (LHC) functions as a light receptor, it captures and delivers excitation energy to photosystems with which it is closely associated. This is Chlorophyll a-b binding protein CP29.3, chloroplastic (LHCB4.3) from Arabidopsis thaliana (Mouse-ear cress).